A 132-amino-acid chain; its full sequence is Putative nickel-responsive regulator (132 aa).

Ni(2+) contacts are provided by His-77, His-88, His-90, and Cys-96.

Belongs to the transcriptional regulatory CopG/NikR family. Requires Ni(2+) as cofactor.

Transcriptional regulator. The protein is Putative nickel-responsive regulator of Brucella abortus (strain S19).